A 432-amino-acid chain; its full sequence is MDHSMSKKLHDEALLHIVGGVNSPSRSNKGVGGGIPVTMERASGAYFYDVDGNKYIDYLAAFGPIITGHAHPHITEAITKAAQNGVLYGTPTKHEITFAKMLKEAIPSLEKVRFTNSGTEAVMTTIRVARAYTGRDKIIKFAGCYHGHFDLVLVEAGSGPSTLGIPDSAGVTKSTAEEVITVPFNDLASFKEALAVWSDQVAAVLVEPIVGNFGMVAPEDGFLEAVNELAHANGSLVIYDEVITAFRFMYGGAQNYLGVIPDLTAMGKIIGGGLPIGAYGGRIDIMEKVAPLGPAYQAGTHAGNPASILSGIACLEVLQEEGLYERFEKYGSMLKDGIEKAALKHGIAVTVNQIVGALTVYFTEDPVTNYAEAGATNGELFGRFFKGMLEEGINLAPSKYEAWFITSAHSEADILETIQAVDTVFGKMVQDN.

Lysine 268 is subject to N6-(pyridoxal phosphate)lysine.

It belongs to the class-III pyridoxal-phosphate-dependent aminotransferase family. HemL subfamily. Homodimer. Pyridoxal 5'-phosphate serves as cofactor.

The protein resides in the cytoplasm. The enzyme catalyses (S)-4-amino-5-oxopentanoate = 5-aminolevulinate. It functions in the pathway porphyrin-containing compound metabolism; protoporphyrin-IX biosynthesis; 5-aminolevulinate from L-glutamyl-tRNA(Glu): step 2/2. In Listeria monocytogenes serotype 4b (strain CLIP80459), this protein is Glutamate-1-semialdehyde 2,1-aminomutase 2.